The following is a 49-amino-acid chain: IgW transmembrane form Tm2T7/Tm7T7/Tm3T3 (49 aa).

N-linked (GlcNAc...) asparagine glycosylation is present at Asn3. A helical transmembrane segment spans residues 25-45 (VAAFAILFILSFLYSTFVTVV).

As to expression, expressed in the spleen. May also be expressed in other lymphoid tissues.

The protein localises to the membrane. This Heterodontus francisci (Horn shark) protein is IgW transmembrane form Tm2T7/Tm7T7/Tm3T3.